We begin with the raw amino-acid sequence, 218 residues long: Cytochrome c biogenesis ATP-binding export protein CcmA (218 aa).

In terms of domain architecture, ABC transporter spans 2–217 (LEAKNLTCIR…KSCLSACCAV (216 aa)). ATP is bound at residue 34–41 (GPNGAGKT).

Belongs to the ABC transporter superfamily. CcmA exporter (TC 3.A.1.107) family. In terms of assembly, the complex is composed of two ATP-binding proteins (CcmA) and two transmembrane proteins (CcmB).

The protein localises to the cell inner membrane. It catalyses the reaction heme b(in) + ATP + H2O = heme b(out) + ADP + phosphate + H(+). Its function is as follows. Part of the ABC transporter complex CcmAB involved in the biogenesis of c-type cytochromes; once thought to export heme, this seems not to be the case, but its exact role is uncertain. Responsible for energy coupling to the transport system. In Yersinia pseudotuberculosis serotype I (strain IP32953), this protein is Cytochrome c biogenesis ATP-binding export protein CcmA.